A 223-amino-acid polypeptide reads, in one-letter code: Alpha-S2-casein (223 aa).

The N-terminal stretch at 1–15 (MKFFIFTCLLAVALA) is a signal peptide. 11 positions are modified to phosphoserine: Ser-23, Ser-24, Ser-25, Ser-72, Ser-73, Ser-74, Ser-77, Ser-145, Ser-147, Ser-151, and Ser-159. A repeat spans 77–141 (SAEVAPEEIK…AGPFTPTVNR (65 aa)). The stretch at residues 159-223 (STEVFTKKTK…TNAIPYVRYL (65 aa)) is a repeat.

Belongs to the alpha-casein family. In terms of tissue distribution, mammary gland specific. Secreted in milk.

The protein localises to the secreted. Important role in the capacity of milk to transport calcium phosphate. The polypeptide is Alpha-S2-casein (CSN1S2) (Capra hircus (Goat)).